Consider the following 122-residue polypeptide: Large ribosomal subunit protein uL14 (122 aa).

Belongs to the universal ribosomal protein uL14 family. In terms of assembly, part of the 50S ribosomal subunit. Forms a cluster with proteins L3 and L19. In the 70S ribosome, L14 and L19 interact and together make contacts with the 16S rRNA in bridges B5 and B8.

Its function is as follows. Binds to 23S rRNA. Forms part of two intersubunit bridges in the 70S ribosome. The polypeptide is Large ribosomal subunit protein uL14 (Rickettsia canadensis (strain McKiel)).